The sequence spans 1247 residues: Nidogen-1 (1247 aa).

The first 28 residues, 1–28 (MLASSSRIRAAWTRALLLPLLLAGPVGC), serve as a signal peptide directing secretion. Residues 106–268 (PFLADLDTTD…GVWVFEIGSP (163 aa)) enclose the NIDO domain. 2 positions are modified to sulfotyrosine: Tyr289 and Tyr296. In terms of domain architecture, EGF-like 1 spans 386-426 (SRQTCANNRHQCSVHAECRDYATGFCCSCVAGYTGNGRQCV). 19 cysteine pairs are disulfide-bonded: Cys390–Cys403, Cys397–Cys412, Cys411–Cys618, Cys414–Cys425, Cys672–Cys685, Cys679–Cys695, Cys697–Cys708, Cys714–Cys727, Cys721–Cys736, Cys738–Cys750, Cys762–Cys777, Cys769–Cys787, Cys789–Cys800, Cys806–Cys817, Cys811–Cys826, Cys828–Cys839, Cys849–Cys878, Cys889–Cys896, and Cys898–Cys919. Residues 430 to 667 (SPQRVNGKVK…GPVREGSPDA (238 aa)) form the Nidogen G2 beta-barrel domain. Residues 668-709 (LQNPCYIGTHGCDTNAACRPGPRTQFTCECSIGFRGDGRTCY) form the EGF-like 2 domain. Residues 702 to 704 (RGD) carry the Cell attachment site motif. Residues 710–751 (DIDECSEQPSVCGSHTICNNHPGTFRCECVEGYQFSDEGTCV) form the EGF-like 3; calcium-binding domain. Residues 758–801 (PINYCETGLHNCDIPQRAQCIYTGGSSYTCSCLPGFSGDGQACQ) enclose the EGF-like 4 domain. In terms of domain architecture, EGF-like 5; calcium-binding spans 802–840 (DVDECQPSRCHPDAFCYNTPGSFTCQCKPGYQGDGFRCV). One can recognise a Thyroglobulin type-1 domain in the interval 846-919 (KTRCQHEREH…RTRPGMTPPC (74 aa)). 2 O-linked (GalNAc...) threonine glycosylation sites follow: Thr922 and Thr935. 4 LDL-receptor class B repeats span residues 990 to 1032 (KMVY…DHLG), 1033 to 1075 (RNIF…DSVR), 1076 to 1120 (GNLY…DAFS), and 1121 to 1162 (SQLC…YGKN). Positions 1208–1244 (GHNYCSVNNGGCTHLCLATPGSRTCRCPDNTLGVDCI) constitute an EGF-like 6 domain. Cystine bridges form between Cys1212-Cys1223, Cys1219-Cys1232, and Cys1234-Cys1243.

Interacts with FBLN1. Interacts with LGALS3BP. Interacts with PLXDC1. Interacts with SVEP1. In terms of processing, N- and O-glycosylated.

Its subcellular location is the secreted. It is found in the extracellular space. The protein resides in the extracellular matrix. It localises to the basement membrane. Functionally, sulfated glycoprotein widely distributed in basement membranes and tightly associated with laminin. Also binds to collagen IV and perlecan. It probably has a role in cell-extracellular matrix interactions. This Homo sapiens (Human) protein is Nidogen-1 (NID1).